The primary structure comprises 496 residues: 3-octaprenyl-4-hydroxybenzoate carboxy-lyase (496 aa).

Residue asparagine 181 coordinates Mn(2+). Residues 184–186 (IYR), 198–200 (RWL), and 203–204 (RG) contribute to the prenylated FMN site. Glutamate 247 is a Mn(2+) binding site. Aspartate 296 functions as the Proton donor in the catalytic mechanism.

It belongs to the UbiD family. As to quaternary structure, homohexamer. Prenylated FMN serves as cofactor. Requires Mn(2+) as cofactor.

It localises to the cell membrane. It carries out the reaction a 4-hydroxy-3-(all-trans-polyprenyl)benzoate + H(+) = a 2-(all-trans-polyprenyl)phenol + CO2. Its pathway is cofactor biosynthesis; ubiquinone biosynthesis. Functionally, catalyzes the decarboxylation of 3-octaprenyl-4-hydroxy benzoate to 2-octaprenylphenol, an intermediate step in ubiquinone biosynthesis. This Aromatoleum aromaticum (strain DSM 19018 / LMG 30748 / EbN1) (Azoarcus sp. (strain EbN1)) protein is 3-octaprenyl-4-hydroxybenzoate carboxy-lyase.